The primary structure comprises 975 residues: Cation-chloride cotransporter 1 (975 aa).

2 disordered regions span residues 1–29 and 104–124; these read MDSG…SKYR and EQIQ…TQGH. Topologically, residues 1–132 are cytoplasmic; that stretch reads MDSGDIEEAG…GHPKPPALKM (132 aa). Residues 133-153 traverse the membrane as a helical segment; that stretch reads GTMMGVFVPCLQNILGIIYYI. The Extracellular portion of the chain corresponds to 154–167; it reads RFTWIVGMAGIGQG. A helical transmembrane segment spans residues 168-188; it reads LVLVFLCGLCTFLTTISLSAI. At 189–214 the chain is on the cytoplasmic side; it reads ATNGAMKGGGPYYLIGRALGPEVGIS. The chain crosses the membrane as a helical span at residues 215–235; the sequence is IGLCFFLGNAVAGALYVLGAV. Over 236 to 273 the chain is Extracellular; it reads ETFLKAFPAAGIFRETITKVNGTAVSESIQSPNSHDLQ. A glycan (N-linked (GlcNAc...) asparagine) is linked at N256. The chain crosses the membrane as a helical span at residues 274–294; it reads VYGIVVTILLCFIVFGGVKMI. Residues 295 to 296 lie on the Cytoplasmic side of the membrane; that stretch reads NR. Residues 297 to 317 form a helical membrane-spanning segment; the sequence is VAPAFLVPVLLSIFCIFIGIF. Topologically, residues 318–359 are extracellular; sequence LAKTDDPDNGITGLRLKSFKDNWGSAYQMTNDAGIPDPTGGT. Residues 360 to 380 traverse the membrane as a helical segment; the sequence is YWSFNELVGLFFPAVTGIMAG. Residues 381–398 are Cytoplasmic-facing; the sequence is SNRSASLKDTQKSIPVGT. The helical transmembrane segment at 399 to 419 threads the bilayer; sequence LAATLTTTSLYLISVLFFGAV. Topologically, residues 420-434 are extracellular; it reads ATRDKLLTDRLLTAT. The helical transmembrane segment at 435–455 threads the bilayer; the sequence is IAWPFPAIVHVGIILSTLGAA. Residues 456–490 lie on the Cytoplasmic side of the membrane; it reads LQSLTGAPRLLAAIANDDILPILNYFKVADTSEPH. Residues 491–511 form a helical membrane-spanning segment; the sequence is IATLFTAFICIGCVVIGNLDL. The Extracellular segment spans residues 512-515; that stretch reads ITPT. Residues 516–536 form a helical membrane-spanning segment; that stretch reads VTMFYLLCYSGVNLSCFLLDL. The Cytoplasmic portion of the chain corresponds to 537-544; sequence LDAPSWRP. A helical transmembrane segment spans residues 545 to 565; it reads RWKYHHWSLSFVGASLCIVIM. The Extracellular segment spans residues 566 to 571; the sequence is FLISWS. The chain crosses the membrane as a helical span at residues 572–592; sequence FTVVAIALASLIYKYVGLKGK. Over 593 to 975 the chain is Cytoplasmic; that stretch reads AGDWGDGFKS…YHRDVVTLFT (383 aa).

This sequence belongs to the SLC12A transporter family. As to expression, expressed in young seedlings cotyledon tips, plant vasculature, root tips and axillary buds. Expressed in root vascular strand in the pericycle and other parenchyma cells bordering xylem vessels. Expressed in the xylem/symplast boundaries of rosette stems, rosette leaves and cauline leaves. Expressed in stipules, trichomes and hydathodes. Expressed in pollen grains.

The protein localises to the membrane. In terms of biological role, cation/chloride cotransporter that mediates potassium-chloride and sodium-chloride cotransports. Involved in plant development and Cl(-) homeostasis. May be involved in long distance Cl(-) transport. Does not function as an H(+)-dependent cotransporter. This Arabidopsis thaliana (Mouse-ear cress) protein is Cation-chloride cotransporter 1 (CCC1).